The following is a 404-amino-acid chain: Lipase lipl-3 (404 aa).

The N-terminal stretch at 1–20 is a signal peptide; sequence MCSSLCALLLVILAVHNVHA. N-linked (GlcNAc...) asparagine glycosylation is present at asparagine 65. Serine 168 functions as the Nucleophile in the catalytic mechanism. Asparagine 272 carries N-linked (GlcNAc...) asparagine glycosylation. Catalysis depends on charge relay system residues aspartate 344 and histidine 376.

Belongs to the AB hydrolase superfamily. Lipase family.

The protein resides in the secreted. Its subcellular location is the lysosome lumen. In terms of biological role, lipase that, together with lipl-1, plays a role in the response to nutrient deprivation by controlling lipid metabolism. Specifically, involved in the breakdown of lipids during lipophagy, a process during which lipids contained in lipid droplets that have been delivered to lysosomes by autophagy are degraded. The chain is Lipase lipl-3 from Caenorhabditis elegans.